The chain runs to 837 residues: Zinc fingers and homeoboxes protein 2 (837 aa).

The tract at residues 27–77 (VDRAKEKGIGTPQPDVAKDSWAAELENSSKENEVIEVKSMGESQSKKLQGG) is interaction with EFNB1. T37 carries the phosphothreonine modification. Residue K64 forms a Glycyl lysine isopeptide (Lys-Gly) (interchain with G-Cter in SUMO2) linkage. 2 consecutive C2H2-type zinc fingers follow at residues 78 to 101 (YECK…DMQH) and 110 to 133 (YVCA…SKFH). Low complexity predominate over residues 164–180 (SITTSGPGTGDSDSGIS). The segment at 164–204 (SITTSGPGTGDSDSGISVSKTPIMKPGKPKADAKKVPKKPE) is disordered. The segment covering 192–204 (PKADAKKVPKKPE) has biased composition (basic and acidic residues). The interval 195 to 358 (DAKKVPKKPE…PAQLAPTKVT (164 aa)) is required for homodimerization. T207 is subject to Phosphothreonine. DNA-binding regions (homeobox) lie at residues 263-324 (NTTK…WSPE), 439-501 (TPAS…IVHI), 530-591 (PQKF…EQAV), and 628-690 (SPSP…TVKW). A required for repressor activity region spans residues 263-446 (NTTKYNSALD…PLTPASDRKK (184 aa)). The interval 263-497 (NTTKYNSALD…SDHRYRCQRG (235 aa)) is required for interaction with NFYA. The tract at residues 317-446 (HGISWSPEEV…PLTPASDRKK (130 aa)) is required for nuclear localization. The tract at residues 404-445 (GQKRPLVTPQAAPEPKRPHIAQVPEPPPKVANPPLTPASDRK) is disordered. Positions 427 to 439 (PEPPPKVANPPLT) are enriched in pro residues. Residue K455 forms a Glycyl lysine isopeptide (Lys-Gly) (interchain with G-Cter in SUMO2) linkage. A disordered region spans residues 755-837 (PAKDCLPAKP…DCVPAEAGQA (83 aa)). Phosphoserine occurs at positions 825 and 827.

Belongs to the ZHX family. Homodimer (via homeobox domain). Heterodimer with ZHX1 (via homeobox domain 1). Heterodimer with ZHX3 (via homeobox domain 1). Heterodimerization with ZHX1 is not necessary for repressor activity. Interacts (via homeobox domain) with NFYA (via N-terminus). Interacts with EFNB1 intracellular domain peptide; the interaction enhances ZHX2 transcriptional repression activity. In terms of tissue distribution, ubiquitously expressed. Expressed in podocytes.

The protein localises to the nucleus. Functionally, acts as a transcriptional repressor. Represses the promoter activity of the CDC25C gene stimulated by NFYA. May play a role in retinal development where it regulates the composition of bipolar cell populations, by promoting differentiation of bipolar OFF-type cells. In the brain, may promote maintenance and suppress differentiation of neural progenitor cells in the developing cortex. The sequence is that of Zinc fingers and homeoboxes protein 2 (ZHX2) from Homo sapiens (Human).